We begin with the raw amino-acid sequence, 526 residues long: Na(+)/H(+) antiporter NhaB (526 aa).

The next 11 helical transmembrane spans lie at 25–45, 52–72, 89–109, 139–159, 204–224, 240–260, 305–325, 355–375, 391–411, 448–468, and 479–499; these read IIAFLIFNPILFMADPYIAGW, IFTLAMALKCYPLQPGGLLLI, IVVNIEVVLLLVFMVAGIYFM, AFLSAFLDALTVVAVIIAVGM, LMMHAAVGTALGGVMTMVGEP, FFVRMSPVTIPVFFAGIATTF, GFIGIWLVIGLAGHFAAVGLI, FTALLCVFFGVVAVIIDQGLF, LVMFYLANGALSMVSDNVFVG, VATPNGQAAFLFLLTSAIAPL, and MALPYTIVLTIVGLAATYFGL.

The protein belongs to the NhaB Na(+)/H(+) (TC 2.A.34) antiporter family.

It is found in the cell inner membrane. It carries out the reaction 2 Na(+)(in) + 3 H(+)(out) = 2 Na(+)(out) + 3 H(+)(in). In terms of biological role, na(+)/H(+) antiporter that extrudes sodium in exchange for external protons. This is Na(+)/H(+) antiporter NhaB from Pseudoalteromonas atlantica (strain T6c / ATCC BAA-1087).